The sequence spans 273 residues: Putative phosphoenolpyruvate synthase regulatory protein (273 aa).

Residue 153–160 participates in ADP binding; that stretch reads AVSRAGKT.

This sequence belongs to the pyruvate, phosphate/water dikinase regulatory protein family. PSRP subfamily.

The enzyme catalyses [pyruvate, water dikinase] + ADP = [pyruvate, water dikinase]-phosphate + AMP + H(+). The catalysed reaction is [pyruvate, water dikinase]-phosphate + phosphate + H(+) = [pyruvate, water dikinase] + diphosphate. In terms of biological role, bifunctional serine/threonine kinase and phosphorylase involved in the regulation of the phosphoenolpyruvate synthase (PEPS) by catalyzing its phosphorylation/dephosphorylation. In Xanthomonas campestris pv. campestris (strain ATCC 33913 / DSM 3586 / NCPPB 528 / LMG 568 / P 25), this protein is Putative phosphoenolpyruvate synthase regulatory protein.